The sequence spans 431 residues: GTPase Obg (431 aa).

The 158-residue stretch at 1 to 158 folds into the Obg domain; it reads MFVDQVKISL…IEVTLELKLL (158 aa). The segment at 118–144 is disordered; that stretch reads KGGRGGRGNSRFASPRNPAPDFSENGE. The OBG-type G domain occupies 159–330; sequence ADVGLVGFPS…LLYAIADKLE (172 aa). Residues 165 to 172, 190 to 194, 212 to 215, 282 to 285, and 311 to 313 each bind GTP; these read GFPSVGKS, FTTIK, DLPG, NKMD, and STF. Ser172 and Thr192 together coordinate Mg(2+). Positions 353–431 constitute an OCT domain; it reads KHTPSQDKFT…ILGGEFEFVE (79 aa).

It belongs to the TRAFAC class OBG-HflX-like GTPase superfamily. OBG GTPase family. Monomer. Requires Mg(2+) as cofactor.

It is found in the cytoplasm. An essential GTPase which binds GTP, GDP and possibly (p)ppGpp with moderate affinity, with high nucleotide exchange rates and a fairly low GTP hydrolysis rate. Plays a role in control of the cell cycle, stress response, ribosome biogenesis and in those bacteria that undergo differentiation, in morphogenesis control. This chain is GTPase Obg, found in Staphylococcus saprophyticus subsp. saprophyticus (strain ATCC 15305 / DSM 20229 / NCIMB 8711 / NCTC 7292 / S-41).